Consider the following 241-residue polypeptide: Cell division cycle-associated protein 4 (241 aa).

An SERTA domain is found at tyrosine 30–glycine 77.

As to expression, highest levels of expression in the pancreas, thymus, testis, spleen, liver, placenta and leukocytes. Relatively low levels in the lung, kidney, prostate, ovary, small intestine and colon. Hardly detectable, if at all, in the brain, skeletal muscle and heart.

It is found in the nucleus. May participate in the regulation of cell proliferation through the E2F/RB pathway. May be involved in molecular regulation of hematopoietic stem cells and progenitor cell lineage commitment and differentiation. The sequence is that of Cell division cycle-associated protein 4 (CDCA4) from Homo sapiens (Human).